A 120-amino-acid polypeptide reads, in one-letter code: Ribonuclease P protein component (120 aa).

Belongs to the RnpA family. Consists of a catalytic RNA component (M1 or rnpB) and a protein subunit.

The catalysed reaction is Endonucleolytic cleavage of RNA, removing 5'-extranucleotides from tRNA precursor.. In terms of biological role, RNaseP catalyzes the removal of the 5'-leader sequence from pre-tRNA to produce the mature 5'-terminus. It can also cleave other RNA substrates such as 4.5S RNA. The protein component plays an auxiliary but essential role in vivo by binding to the 5'-leader sequence and broadening the substrate specificity of the ribozyme. The protein is Ribonuclease P protein component of Rickettsia bellii (strain RML369-C).